The chain runs to 381 residues: Phosphatidyl-myo-inositol mannosyltransferase (381 aa).

GDP-alpha-D-mannose is bound by residues Tyr-9 and Gly-16. A 1,2-diacyl-sn-glycero-3-phospho-(1D-myo-inositol)-binding positions include Gln-18, 69–70 (FN), and Arg-75. GDP-alpha-D-mannose is bound by residues Arg-204, 209 to 210 (RK), 251 to 253 (LDD), Arg-256, 274 to 278 (ESFGI), and Glu-282.

Belongs to the glycosyltransferase group 1 family. Glycosyltransferase 4 subfamily. As to quaternary structure, monomer. Requires Mg(2+) as cofactor.

Its subcellular location is the cell membrane. The catalysed reaction is a 1,2-diacyl-sn-glycero-3-phospho-(1D-myo-inositol) + GDP-alpha-D-mannose = a 1,2-diacyl-sn-glycero-3-phospho-[alpha-D-mannopyranosyl-(1&lt;-&gt;6)-D-myo-inositol] + GDP + H(+). The protein operates within phospholipid metabolism; phosphatidylinositol metabolism. In terms of biological role, involved in the biosynthesis of phosphatidyl-myo-inositol mannosides (PIM) which are early precursors in the biosynthesis of lipomannans (LM) and lipoarabinomannans (LAM). Catalyzes the addition of a mannosyl residue from GDP-D-mannose (GDP-Man) to the position 2 of the carrier lipid phosphatidyl-myo-inositol (PI) to generate a phosphatidyl-myo-inositol bearing an alpha-1,2-linked mannose residue (PIM1). This is Phosphatidyl-myo-inositol mannosyltransferase from Propionibacterium freudenreichii subsp. shermanii (strain ATCC 9614 / DSM 4902 / CIP 103027 / NCIMB 8099 / CIRM-BIA1).